An 825-amino-acid polypeptide reads, in one-letter code: NT-3 growth factor receptor (825 aa).

Residues 1–31 (MDVSLCPAKCSFWRIFLLGSVWLDYVGSVLA) form the signal peptide. Disulfide bonds link cysteine 32/cysteine 38 and cysteine 36/cysteine 45. The Extracellular segment spans residues 32–429 (CPANCVCSKT…TVTHKPEEDT (398 aa)). Residues asparagine 68, asparagine 72, and asparagine 79 are each glycosylated (N-linked (GlcNAc...) asparagine). 2 LRR repeats span residues 104 to 125 (GLQK…AFAK) and 128 to 149 (HLRY…LFQT). Asparagine 133 and asparagine 163 each carry an N-linked (GlcNAc...) asparagine glycan. The LRRCT domain maps to 160-209 (NFFNCSCDIRWMQLWQEQGEAKLNSQSLYCISADGSQLPLFRMNISQCDL). Disulfide bonds link cysteine 164–cysteine 189 and cysteine 166–cysteine 207. Residues asparagine 203, asparagine 218, asparagine 232, asparagine 259, asparagine 267, asparagine 272, and asparagine 294 are each glycosylated (N-linked (GlcNAc...) asparagine). 2 consecutive Ig-like C2-type domains span residues 210-300 (PEIS…VALT) and 309-382 (SLEE…NRQE). A disulfide bridge links cysteine 231 with cysteine 284. A disulfide bridge connects residues cysteine 320 and cysteine 362. N-linked (GlcNAc...) asparagine glycans are attached at residues asparagine 375 and asparagine 388. A helical membrane pass occupies residues 430-453 (FGVSIAVGLAAFACVLLVVLFIMI). The Cytoplasmic portion of the chain corresponds to 454–825 (NKYGRRSKFG…ATPIYLDILG (372 aa)). At tyrosine 516 the chain carries Phosphotyrosine; by autocatalysis. The 277-residue stretch at 538–814 (IVLKRELGEG…EIYKILHALG (277 aa)) folds into the Protein kinase domain. ATP is bound by residues 544–552 (LGEGAFGKV) and lysine 572. The Proton acceptor role is filled by aspartate 679. A phosphotyrosine; by autocatalysis mark is found at tyrosine 705, tyrosine 709, tyrosine 710, and tyrosine 820.

It belongs to the protein kinase superfamily. Tyr protein kinase family. Insulin receptor subfamily. In terms of assembly, exists in a dynamic equilibrium between monomeric (low affinity) and dimeric (high affinity) structures. Binds SH2B2. Interacts with SQSTM1 and KIDINS220. Interacts with PTPRS. Interacts with MAPK8IP3/JIP3. Ligand-mediated auto-phosphorylation. Preferentially in the brain, low levels in the ovaries.

It is found in the membrane. It carries out the reaction L-tyrosyl-[protein] + ATP = O-phospho-L-tyrosyl-[protein] + ADP + H(+). Functionally, receptor tyrosine kinase involved in nervous system and probably heart development. Upon binding of its ligand NTF3/neurotrophin-3, NTRK3 autophosphorylates and activates different signaling pathways, including the phosphatidylinositol 3-kinase/AKT and the MAPK pathways, that control cell survival and differentiation. In Sus scrofa (Pig), this protein is NT-3 growth factor receptor (NTRK3).